The primary structure comprises 113 residues: Hydrogenase maturation factor HypA (113 aa).

His2 is a Ni(2+) binding site. Zn(2+) contacts are provided by Cys73, Cys76, Cys89, and Cys92.

The protein belongs to the HypA/HybF family.

In terms of biological role, involved in the maturation of [NiFe] hydrogenases. Required for nickel insertion into the metal center of the hydrogenase. This Azorhizobium caulinodans (strain ATCC 43989 / DSM 5975 / JCM 20966 / LMG 6465 / NBRC 14845 / NCIMB 13405 / ORS 571) protein is Hydrogenase maturation factor HypA.